A 592-amino-acid polypeptide reads, in one-letter code: MYGHHPDYGYGNYGHPPPFAGPESSNSHYGMPPSQGTNSQNNMMMRSQATEPQPIGNTVSPLEFRIHDMNRRLYIFSSTGVSENDQQQWWDAFSHEFFDDDCKLWFVIGSEPVAFASRERYIINRQFIPKFFRSIFDSGMRELQYVLRGPSRECTLANGSQAYENENVLQITRYDQSSQFEVNTEGKLYVEFAPFDEVMNYRIKAWTLELKRSNEFVYNQNTADYRVEAQNPEQENKPRMGFFKSTFNLMTMLKILDPMQSIMSSAKSAPAITPREVMKRTLFQHHQVRQQNMRQQQLNQQMMIPAPEPEKPKPARKRQRKPAANPRGSKKATAAAAAAAAAATNGVPPTVPTASPANNQQFPPNPMTSQFQQMSYPDVMVVGEPSMMGSEFGENDERTISRVENSQYDPNAMQMQSLGQGPNSSMNINGRNMMNQHHPGMQPPPGQQHMPPHSMGSQMPTSMHNPMHMPPGSMQGHGGMPPMPSTMANQMPPPNLPPHTMSNQMPNSRMPPMQGQMPPSGMPGQMSNPNMMGSGMPPMSMSSQMPGSMSNPMPNQMPGGMQMNQMPPPNYSQYTGGPPPQWPPPNSAMITG.

Disordered regions lie at residues 14 to 41 (GHPPPFAGPESSNSHYGMPPSQGTNSQN) and 305 to 368 (PAPE…NPMT). Residues 23–41 (ESSNSHYGMPPSQGTNSQN) are compositionally biased toward polar residues. The span at 322–344 (PAANPRGSKKATAAAAAAAAAAT) shows a compositional bias: low complexity. A compositionally biased stretch (polar residues) spans 352 to 368 (PTASPANNQQFPPNPMT). The LIM interaction domain (LID) domain occupies 378–417 (DVMVVGEPSMMGSEFGENDERTISRVENSQYDPNAMQMQS). Disordered stretches follow at residues 437-458 (HHPGMQPPPGQQHMPPHSMGSQ) and 559-592 (GGMQMNQMPPPNYSQYTGGPPPQWPPPNSAMITG). A compositionally biased stretch (pro residues) spans 577 to 586 (GPPPQWPPPN).

This sequence belongs to the LDB family. As to quaternary structure, interacts with blmp-1. Expressed in all neurons and some other tissues of the adult, including vulval muscle, and, in males, all the neurons of the tail region. Expressed in vulval cells.

In terms of biological role, binds to the LIM domain of LIM domain-containing transcription factors. Required for the blmp-1-mediated transcriptional activation or repression of several hypodermal genes, such as bed-3. Regulates sam-10 nuclear localization in PLM neurons. Has a role in synaptic differentiation of PLM mechanosensory neurons. Involved in gonadogenesis. The polypeptide is LIM domain-binding protein 1 (Caenorhabditis elegans).